The primary structure comprises 149 residues: Flagellar assembly factor FliW (149 aa).

The protein belongs to the FliW family. In terms of assembly, interacts with translational regulator CsrA and flagellin(s).

The protein localises to the cytoplasm. In terms of biological role, acts as an anti-CsrA protein, binds CsrA and prevents it from repressing translation of its target genes, one of which is flagellin. Binds to flagellin and participates in the assembly of the flagellum. The protein is Flagellar assembly factor FliW of Thermotoga petrophila (strain ATCC BAA-488 / DSM 13995 / JCM 10881 / RKU-1).